Here is a 752-residue protein sequence, read N- to C-terminus: Phosphoribosylformylglycinamidine synthase subunit PurL (752 aa).

His58 is an active-site residue. 2 residues coordinate ATP: Tyr61 and Lys103. Residue Glu105 coordinates Mg(2+). Residues 106–109 (SHNH) and Arg128 contribute to the substrate site. His107 (proton acceptor) is an active-site residue. Residue Asp129 coordinates Mg(2+). Gln253 is a substrate binding site. A Mg(2+)-binding site is contributed by Asp281. A substrate-binding site is contributed by 325–327 (ESQ). ATP-binding residues include Asp513 and Gly550. Residue Asn551 participates in Mg(2+) binding. Residue Ser553 participates in substrate binding.

It belongs to the FGAMS family. In terms of assembly, monomer. Part of the FGAM synthase complex composed of 1 PurL, 1 PurQ and 2 PurS subunits.

It localises to the cytoplasm. The enzyme catalyses N(2)-formyl-N(1)-(5-phospho-beta-D-ribosyl)glycinamide + L-glutamine + ATP + H2O = 2-formamido-N(1)-(5-O-phospho-beta-D-ribosyl)acetamidine + L-glutamate + ADP + phosphate + H(+). It functions in the pathway purine metabolism; IMP biosynthesis via de novo pathway; 5-amino-1-(5-phospho-D-ribosyl)imidazole from N(2)-formyl-N(1)-(5-phospho-D-ribosyl)glycinamide: step 1/2. Its function is as follows. Part of the phosphoribosylformylglycinamidine synthase complex involved in the purines biosynthetic pathway. Catalyzes the ATP-dependent conversion of formylglycinamide ribonucleotide (FGAR) and glutamine to yield formylglycinamidine ribonucleotide (FGAM) and glutamate. The FGAM synthase complex is composed of three subunits. PurQ produces an ammonia molecule by converting glutamine to glutamate. PurL transfers the ammonia molecule to FGAR to form FGAM in an ATP-dependent manner. PurS interacts with PurQ and PurL and is thought to assist in the transfer of the ammonia molecule from PurQ to PurL. The protein is Phosphoribosylformylglycinamidine synthase subunit PurL of Streptomyces avermitilis (strain ATCC 31267 / DSM 46492 / JCM 5070 / NBRC 14893 / NCIMB 12804 / NRRL 8165 / MA-4680).